The following is a 378-amino-acid chain: TelA-like protein SAUSA300_1299 (378 aa).

It belongs to the TelA family.

This Staphylococcus aureus (strain USA300) protein is TelA-like protein SAUSA300_1299.